Reading from the N-terminus, the 127-residue chain is Fatty acid binding protein 1-A, liver (127 aa).

It belongs to the calycin superfamily. Fatty-acid binding protein (FABP) family. In adults, weakly expressed in the intestine.

The protein resides in the cytoplasm. Its function is as follows. Binds free fatty acids and their coenzyme A derivatives, bilirubin, and some other small molecules in the cytoplasm. May be involved in intracellular lipid transport. This is Fatty acid binding protein 1-A, liver from Danio rerio (Zebrafish).